Here is a 189-residue protein sequence, read N- to C-terminus: MILPIIIYGNSFLRKKCIEIDKSYKDINFLINNMYDTMYQAKGIGLSAPQIGLSIRLFIIEYNNFLKQKFKKVFINPIIIKKYGYNLISKEGCLSIPNIIENIKRKNNIIIEYYDENWKKYKQHFNGLLSIIIQHEYDHIEGKLFIDNIFILKNILIKKNFNLNYNLYKLYKLSKLYKFYLIYRSRYRI.

Positions 93 and 135 each coordinate Fe cation. The active site involves Glu136. His139 lines the Fe cation pocket.

Belongs to the polypeptide deformylase family. It depends on Fe(2+) as a cofactor.

The catalysed reaction is N-terminal N-formyl-L-methionyl-[peptide] + H2O = N-terminal L-methionyl-[peptide] + formate. Removes the formyl group from the N-terminal Met of newly synthesized proteins. Requires at least a dipeptide for an efficient rate of reaction. N-terminal L-methionine is a prerequisite for activity but the enzyme has broad specificity at other positions. This is Peptide deformylase from Karelsulcia muelleri (strain GWSS) (Sulcia muelleri).